The chain runs to 469 residues: Adenosylhomocysteinase (469 aa).

Residues threonine 63, aspartate 139, and glutamate 164 each coordinate substrate. Residue 165-167 (TTT) participates in NAD(+) binding. Lysine 194 and aspartate 198 together coordinate substrate. Residues asparagine 199, 228–233 (GYGDVG), glutamate 251, asparagine 300, 321–323 (IGH), and asparagine 375 contribute to the NAD(+) site.

Belongs to the adenosylhomocysteinase family. Requires NAD(+) as cofactor.

The protein resides in the cytoplasm. The enzyme catalyses S-adenosyl-L-homocysteine + H2O = L-homocysteine + adenosine. The protein operates within amino-acid biosynthesis; L-homocysteine biosynthesis; L-homocysteine from S-adenosyl-L-homocysteine: step 1/1. In terms of biological role, may play a key role in the regulation of the intracellular concentration of adenosylhomocysteine. The sequence is that of Adenosylhomocysteinase from Pseudomonas fluorescens (strain Pf0-1).